Here is a 575-residue protein sequence, read N- to C-terminus: Phosphoenolpyruvate-protein phosphotransferase (575 aa).

Residue His-191 is the Tele-phosphohistidine intermediate of the active site. Phosphoenolpyruvate contacts are provided by Arg-298 and Arg-334. Positions 435 and 459 each coordinate Mg(2+). Phosphoenolpyruvate is bound by residues 458–459 and Arg-469; that span reads ND. Cys-506 acts as the Proton donor in catalysis.

This sequence belongs to the PEP-utilizing enzyme family. Homodimer. Requires Mg(2+) as cofactor.

Its subcellular location is the cytoplasm. The enzyme catalyses L-histidyl-[protein] + phosphoenolpyruvate = N(pros)-phospho-L-histidyl-[protein] + pyruvate. Functionally, general (non sugar-specific) component of the phosphoenolpyruvate-dependent sugar phosphotransferase system (sugar PTS). This major carbohydrate active-transport system catalyzes the phosphorylation of incoming sugar substrates concomitantly with their translocation across the cell membrane. Enzyme I transfers the phosphoryl group from phosphoenolpyruvate (PEP) to the phosphoryl carrier protein (HPr). The protein is Phosphoenolpyruvate-protein phosphotransferase (ptsI) of Lactococcus lactis subsp. lactis (strain IL1403) (Streptococcus lactis).